A 618-amino-acid chain; its full sequence is Grainyhead-like protein 1 homolog (618 aa).

The segment at 1–91 is transcription activation; sequence MTQEYDNKRP…EVEHPEPDHS (91 aa). Positions 74–92 are enriched in basic and acidic residues; the sequence is RRSSTAKPEVEHPEPDHSK. The tract at residues 74–94 is disordered; that stretch reads RRSSTAKPEVEHPEPDHSKRN. At threonine 208 the chain carries Phosphothreonine. The region spanning 248–474 is the Grh/CP2 DB domain; sequence SGNNFEYTLE…DLDTQPVLFI (227 aa). 2 interaction with DNA regions span residues 380 to 389 and 427 to 430; these read TDFSSQKGVK and RKIR.

This sequence belongs to the grh/CP2 family. Grainyhead subfamily. Binds DNA as homodimer. Homodimer, also forms heterodimers with GRHL2 or GRHL3. Post-translationally, methylation at Arg-9 and Lys-116 may be involved in regulating transcriptional activation. Isoform 1 is highly expressed in brain, pancreas, tonsil, placenta and kidney. Isoform 2 is highly expressed in brain and liver. Expressed at very low levels in non-steroidogenic cells.

Its subcellular location is the nucleus. Transcription factor involved in epithelial development. Binds directly to the consensus DNA sequence 5'-AACCGGTT-3'. Important regulator of DSG1 in the context of hair anchorage and epidermal differentiation, participates in the maintenance of the skin barrier. There is no genetic interaction with GRHL3, nor functional cooperativity due to diverse target gene selectivity during epithelia development. May play a role in regulating glucose homeostasis and insulin signaling. In terms of biological role, functions as a transcription activator. Functionally, may function as a repressor in tissues where both isoform 1 and isoform 2 are expressed. This Homo sapiens (Human) protein is Grainyhead-like protein 1 homolog.